The primary structure comprises 104 residues: Large ribosomal subunit protein uL24 (104 aa).

Belongs to the universal ribosomal protein uL24 family. As to quaternary structure, part of the 50S ribosomal subunit.

Its function is as follows. One of two assembly initiator proteins, it binds directly to the 5'-end of the 23S rRNA, where it nucleates assembly of the 50S subunit. In terms of biological role, one of the proteins that surrounds the polypeptide exit tunnel on the outside of the subunit. The protein is Large ribosomal subunit protein uL24 of Serratia proteamaculans (strain 568).